A 130-amino-acid polypeptide reads, in one-letter code: MYSQTTRDIEVTVKPFYLDDQSSPGDNHFVWAYRVRIVNKGSRTVQLLRRHWVITDAIGRVQEVKGPGVVGEQPVLRPGDAYEYTSGTPLPTPSGIMVGTYEMEDEDGSAFDIAIPAFSLDSPHEKPRLN.

An ApaG domain is found at S3–P127.

This Paramagnetospirillum magneticum (strain ATCC 700264 / AMB-1) (Magnetospirillum magneticum) protein is Protein ApaG.